We begin with the raw amino-acid sequence, 268 residues long: Protein DEEPER ROOTING 1 (268 aa).

Over residues 11–21 (LNGKQGNKKPN) the composition is skewed to low complexity. The tract at residues 11–39 (LNGKQGNKKPNTVPITTHPAKQEPREEFS) is disordered. The segment covering 30–39 (AKQEPREEFS) has biased composition (basic and acidic residues). Residues 44 to 50 (GLLAIGT) carry the IGT motif motif. A disordered region spans residues 220-246 (SRAASMKKYLEDRQIPTKKESNTEDDT). Residues 227-246 (KYLEDRQIPTKKESNTEDDT) are compositionally biased toward basic and acidic residues.

It belongs to the LAZY family. Expressed in roots.

Functionally, involved in the development of the root system architecture by influencing lateral root angles and primary root length. This is Protein DEEPER ROOTING 1 from Prunus persica (Peach).